We begin with the raw amino-acid sequence, 437 residues long: MEDASLKSFLEKVGYRVVDRTLSREYEVARLIAETQGCGPPLLARIEGVRQPVAVNVVDTREKLYKALGVTGDSEAYAKIVDSTMRPGRLEYVDKPPLDEMPEGFEGLPAARFYEGEAGLYLSSGIVIACYEGVCNASIHRLLILGRERAAIRIVPRHLWHLYRKARERGEDLPATVVVGLHPAVLLAAATSPPLGVFELGLAAGMLGGSMKVYRSPVHGNPVPLGAAMVADVWITGEQVEEGPYVDALLTYDRVRRQPVVRLEAAYIKEGEYTHTIMGGSLEHVNLMGFPREASIWEAVRRALPRVRAVRLTPASGGWLHAVIAVEKQHEGDGKTAIMAAFAAHPSLKHVVVVDSDVDVDDPMQVEWAIATRFQADKDLVIIPRARGSTLDPSAADGLTAKMGLDATKPLDAGMGYERGRIPGFKWGSRRCHQPGD.

2 residues coordinate Mn(2+): Asn-136 and Glu-199. Asp-247 serves as the catalytic Proton acceptor.

It belongs to the UbiD family. It depends on prenylated FMN as a cofactor. Requires Mn(2+) as cofactor.

It catalyses the reaction (2E)-3-methyl-5-phosphooxypent-2-enoate + H(+) = isopentenyl phosphate + CO2. It participates in isoprenoid biosynthesis; isopentenyl diphosphate biosynthesis via mevalonate pathway. Catalyzes the conversion of trans-anhydromevalonate 5-phosphate (tAHMP) into isopentenyl phosphate. Involved in the archaeal mevalonate (MVA) pathway, which provides fundamental precursors for isoprenoid biosynthesis, such as isopentenyl diphosphate (IPP) and dimethylallyl diphosphate (DMAPP). The protein is Anhydromevalonate phosphate decarboxylase of Aeropyrum pernix (strain ATCC 700893 / DSM 11879 / JCM 9820 / NBRC 100138 / K1).